Reading from the N-terminus, the 567-residue chain is Urease subunit alpha (567 aa).

The 439-residue stretch at 129 to 567 (GGIDAHIHFI…LPLAQLYCLF (439 aa)) folds into the Urease domain. The Ni(2+) site is built by His134, His136, and Lys217. At Lys217 the chain carries N6-carboxylysine. Position 219 (His219) interacts with substrate. Ni(2+) contacts are provided by His246 and His272. Catalysis depends on His320, which acts as the Proton donor. Asp360 serves as a coordination point for Ni(2+).

Belongs to the metallo-dependent hydrolases superfamily. Urease alpha subunit family. As to quaternary structure, heterotrimer of UreA (gamma), UreB (beta) and UreC (alpha) subunits. Three heterotrimers associate to form the active enzyme. Ni cation serves as cofactor. Carboxylation allows a single lysine to coordinate two nickel ions.

The protein resides in the cytoplasm. It carries out the reaction urea + 2 H2O + H(+) = hydrogencarbonate + 2 NH4(+). It participates in nitrogen metabolism; urea degradation; CO(2) and NH(3) from urea (urease route): step 1/1. This is Urease subunit alpha from Alteromonas mediterranea (strain DSM 17117 / CIP 110805 / LMG 28347 / Deep ecotype).